The following is a 211-amino-acid chain: MNKGLIGKKLGMTQIFAEDGRRIAVTVVEAGPCVVVQKKSVAKDGYSAIQVGLGAKDASRANAAQIGHCKGAGAGVFTHYRELRMDNTDAYNLGDVIEAAVFEEGDLVDVTGTSIGKGFAGVIKRWGFKGGRSSHGSRFHRAPGSIGCSATPSRVFKNKKMPGQLGNEKVTVQRLKVVRVDAADNLILLGGAIPGSANGVVLIKDSVKAKK.

The protein belongs to the universal ribosomal protein uL3 family. As to quaternary structure, part of the 50S ribosomal subunit. Forms a cluster with proteins L14 and L19.

Its function is as follows. One of the primary rRNA binding proteins, it binds directly near the 3'-end of the 23S rRNA, where it nucleates assembly of the 50S subunit. The protein is Large ribosomal subunit protein uL3 of Geobacter sp. (strain M21).